The sequence spans 210 residues: Ribosomal RNA large subunit methyltransferase E (210 aa).

S-adenosyl-L-methionine is bound by residues Gly61, Trp63, Asp81, Asp97, and Asp122. Residue Lys162 is the Proton acceptor of the active site. Positions 187 to 196 are enriched in basic and acidic residues; the sequence is KPEASRKRSP. The tract at residues 187–210 is disordered; sequence KPEASRKRSPEVYALGQGKRAHMK.

Belongs to the class I-like SAM-binding methyltransferase superfamily. RNA methyltransferase RlmE family.

It is found in the cytoplasm. It carries out the reaction uridine(2552) in 23S rRNA + S-adenosyl-L-methionine = 2'-O-methyluridine(2552) in 23S rRNA + S-adenosyl-L-homocysteine + H(+). Specifically methylates the uridine in position 2552 of 23S rRNA at the 2'-O position of the ribose in the fully assembled 50S ribosomal subunit. The protein is Ribosomal RNA large subunit methyltransferase E of Stenotrophomonas maltophilia (strain K279a).